A 122-amino-acid polypeptide reads, in one-letter code: uncharacterized protein (122 aa).

This is an uncharacterized protein from Carica papaya (Papaya).